We begin with the raw amino-acid sequence, 359 residues long: tRNA-specific 2-thiouridylase MnmA (359 aa).

Residues Gly-9–Ser-16 and Met-35 contribute to the ATP site. The tract at residues Asn-95–Asp-97 is interaction with target base in tRNA. Cys-100 serves as the catalytic Nucleophile. A disulfide bridge links Cys-100 with Cys-197. Gly-124 contacts ATP. The interaction with tRNA stretch occupies residues Lys-147–Gln-149. Residue Cys-197 is the Cysteine persulfide intermediate of the active site. The tract at residues Arg-309 to Tyr-310 is interaction with tRNA.

The protein belongs to the MnmA/TRMU family.

It is found in the cytoplasm. The catalysed reaction is S-sulfanyl-L-cysteinyl-[protein] + uridine(34) in tRNA + AH2 + ATP = 2-thiouridine(34) in tRNA + L-cysteinyl-[protein] + A + AMP + diphosphate + H(+). Its function is as follows. Catalyzes the 2-thiolation of uridine at the wobble position (U34) of tRNA, leading to the formation of s(2)U34. The protein is tRNA-specific 2-thiouridylase MnmA of Francisella philomiragia subsp. philomiragia (strain ATCC 25017 / CCUG 19701 / FSC 153 / O#319-036).